The primary structure comprises 372 residues: 3-dehydroquinate synthase (372 aa).

Residues 116–120 (GVVGD), 140–141 (TT), lysine 153, lysine 162, and 180–183 (TLNT) each bind NAD(+). 3 residues coordinate Zn(2+): glutamate 195, histidine 260, and histidine 277.

Belongs to the sugar phosphate cyclases superfamily. Dehydroquinate synthase family. It depends on Co(2+) as a cofactor. Requires Zn(2+) as cofactor. NAD(+) serves as cofactor.

It is found in the cytoplasm. The catalysed reaction is 7-phospho-2-dehydro-3-deoxy-D-arabino-heptonate = 3-dehydroquinate + phosphate. Its pathway is metabolic intermediate biosynthesis; chorismate biosynthesis; chorismate from D-erythrose 4-phosphate and phosphoenolpyruvate: step 2/7. In terms of biological role, catalyzes the conversion of 3-deoxy-D-arabino-heptulosonate 7-phosphate (DAHP) to dehydroquinate (DHQ). This chain is 3-dehydroquinate synthase, found in Prochlorococcus marinus (strain MIT 9303).